A 281-amino-acid polypeptide reads, in one-letter code: Splicing regulator RBM11 (281 aa).

One can recognise an RRM domain in the interval 10–87; that stretch reads RTVFVGNLEA…RPINVQYRFG (78 aa). The segment at 184–281 is disordered; that stretch reads PSSYKWTHQQ…FRKSKKKKRY (98 aa). Composition is skewed to polar residues over residues 187-217 and 229-242; these read YKWT…SSLN and YKWT…SDLY. The Bipartite nuclear localization signal motif lies at 245–280; that stretch reads NKRKRQKQTSDSDSSTDNNRGNECSQKFRKSKKKKR. A compositionally biased stretch (basic residues) spans 271–281; it reads KFRKSKKKKRY.

Homodimer. Expressed in brain, hippocampus, prefrontal cortex, cerebellum, spinal cord, testis, mammary gland, spleen and kidney. Also expressed in fetal brain.

The protein resides in the nucleus. Its subcellular location is the nucleoplasm. It localises to the nucleus speckle. In terms of biological role, tissue-specific splicing factor with potential implication in the regulation of alternative splicing during neuron and germ cell differentiation. Antagonizes SRSF1-mediated BCL-X splicing. May affect the choice of alternative 5' splice sites by binding to specific sequences in exons and antagonizing the SR protein SRSF1. The protein is Splicing regulator RBM11 of Homo sapiens (Human).